Consider the following 440-residue polypeptide: Sialyltransferase-like protein 2 (440 aa).

Residues methionine 1–histidine 5 lie on the Cytoplasmic side of the membrane. A helical; Signal-anchor for type II membrane protein membrane pass occupies residues leucine 6–valine 26. At serine 27–aspartate 440 the chain is on the lumenal side. Asparagine 113 and asparagine 149 each carry an N-linked (GlcNAc...) asparagine glycan.

The protein belongs to the glycosyltransferase 29 family.

The protein resides in the golgi apparatus membrane. Functionally, may be involved in the transfer of 2-keto-3-deoxy-D-lyxo-heptulosaric acid (Dha) and/or 2-keto-3-deoxy-D-manno-octulosonic acid (Kdo) on the homogalacturonan backbone of rhamnogalacturonan-II. Required for efficient pollen grain germination and pollen tube elongation. Does not possess sialyltransferase activity in vitro. This is Sialyltransferase-like protein 2 from Arabidopsis thaliana (Mouse-ear cress).